The following is a 167-amino-acid chain: Crossover junction endodeoxyribonuclease RuvC (167 aa).

Catalysis depends on residues aspartate 7, glutamate 67, and aspartate 139. Mg(2+)-binding residues include aspartate 7, glutamate 67, and aspartate 139.

This sequence belongs to the RuvC family. As to quaternary structure, homodimer which binds Holliday junction (HJ) DNA. The HJ becomes 2-fold symmetrical on binding to RuvC with unstacked arms; it has a different conformation from HJ DNA in complex with RuvA. In the full resolvosome a probable DNA-RuvA(4)-RuvB(12)-RuvC(2) complex forms which resolves the HJ. Mg(2+) is required as a cofactor.

It localises to the cytoplasm. It carries out the reaction Endonucleolytic cleavage at a junction such as a reciprocal single-stranded crossover between two homologous DNA duplexes (Holliday junction).. In terms of biological role, the RuvA-RuvB-RuvC complex processes Holliday junction (HJ) DNA during genetic recombination and DNA repair. Endonuclease that resolves HJ intermediates. Cleaves cruciform DNA by making single-stranded nicks across the HJ at symmetrical positions within the homologous arms, yielding a 5'-phosphate and a 3'-hydroxyl group; requires a central core of homology in the junction. The consensus cleavage sequence is 5'-(A/T)TT(C/G)-3'. Cleavage occurs on the 3'-side of the TT dinucleotide at the point of strand exchange. HJ branch migration catalyzed by RuvA-RuvB allows RuvC to scan DNA until it finds its consensus sequence, where it cleaves and resolves the cruciform DNA. This chain is Crossover junction endodeoxyribonuclease RuvC, found in Zymomonas mobilis subsp. mobilis (strain ATCC 31821 / ZM4 / CP4).